The primary structure comprises 132 residues: MSTDRSQVFGVARIFASFNDTFVHVTDLSGKETIARVTGGMKVKADRDESSPYAAMLAAQDVAAKCKEVGITAVHIKLRATGGTKTKTPGPGGQSALRALARSGLRIGRIEDVTPVPSDSTRRKGGRRGRRL.

Residues Ile110 to Leu132 are disordered. Basic residues predominate over residues Arg123–Leu132.

Belongs to the universal ribosomal protein uS11 family. As to quaternary structure, component of the small ribosomal subunit. Mature ribosomes consist of a small (40S) and a large (60S) subunit. The 40S subunit contains about 32 different proteins and 1 molecule of RNA (18S). The 60S subunit contains 45 different proteins and 3 molecules of RNA (25S, 5.8S and 5S).

Its subcellular location is the cytoplasm. Functionally, component of the ribosome, a large ribonucleoprotein complex responsible for the synthesis of proteins in the cell. The small ribosomal subunit (SSU) binds messenger RNAs (mRNAs) and translates the encoded message by selecting cognate aminoacyl-transfer RNA (tRNA) molecules. The large subunit (LSU) contains the ribosomal catalytic site termed the peptidyl transferase center (PTC), which catalyzes the formation of peptide bonds, thereby polymerizing the amino acids delivered by tRNAs into a polypeptide chain. The nascent polypeptides leave the ribosome through a tunnel in the LSU and interact with protein factors that function in enzymatic processing, targeting, and the membrane insertion of nascent chains at the exit of the ribosomal tunnel. RPS14B is involved in nucleolar processing of pre-18S ribosomal RNA and ribosome assembly. This Candida albicans (strain SC5314 / ATCC MYA-2876) (Yeast) protein is Small ribosomal subunit protein uS11 (RPS14B).